Reading from the N-terminus, the 269-residue chain is Glutamate racemase (269 aa).

Substrate-binding positions include 7–8 (DS) and 39–40 (YG). Catalysis depends on cysteine 70, which acts as the Proton donor/acceptor. 71–72 (NT) is a binding site for substrate. Catalysis depends on cysteine 194, which acts as the Proton donor/acceptor. 195 to 196 (TH) lines the substrate pocket.

This sequence belongs to the aspartate/glutamate racemases family.

It catalyses the reaction L-glutamate = D-glutamate. Its pathway is cell wall biogenesis; peptidoglycan biosynthesis. Its function is as follows. Provides the (R)-glutamate required for cell wall biosynthesis. The chain is Glutamate racemase from Ruegeria pomeroyi (strain ATCC 700808 / DSM 15171 / DSS-3) (Silicibacter pomeroyi).